A 680-amino-acid polypeptide reads, in one-letter code: DNA ligase (680 aa).

Residues 35 to 39 (DADFD), 86 to 87 (SL), and Glu111 each bind NAD(+). Lys113 acts as the N6-AMP-lysine intermediate in catalysis. NAD(+) contacts are provided by Arg134, Glu174, Lys290, and Lys314. Cys408, Cys411, Cys427, and Cys433 together coordinate Zn(2+). In terms of domain architecture, BRCT spans 597-680 (VAEQTLEGLT…RLLNTGSADE (84 aa)).

This sequence belongs to the NAD-dependent DNA ligase family. LigA subfamily. The cofactor is Mg(2+). Requires Mn(2+) as cofactor.

The catalysed reaction is NAD(+) + (deoxyribonucleotide)n-3'-hydroxyl + 5'-phospho-(deoxyribonucleotide)m = (deoxyribonucleotide)n+m + AMP + beta-nicotinamide D-nucleotide.. DNA ligase that catalyzes the formation of phosphodiester linkages between 5'-phosphoryl and 3'-hydroxyl groups in double-stranded DNA using NAD as a coenzyme and as the energy source for the reaction. It is essential for DNA replication and repair of damaged DNA. This Corynebacterium glutamicum (strain R) protein is DNA ligase.